Consider the following 562-residue polypeptide: NAD-dependent malic enzyme (562 aa).

The Proton donor role is filled by Tyr-101. Arg-154 contacts NAD(+). The active-site Proton acceptor is Lys-172. A divalent metal cation-binding residues include Glu-243, Asp-244, and Asp-267. NAD(+)-binding residues include Asp-267 and Asn-415.

It belongs to the malic enzymes family. In terms of assembly, homotetramer. The cofactor is Mg(2+). Requires Mn(2+) as cofactor.

It catalyses the reaction (S)-malate + NAD(+) = pyruvate + CO2 + NADH. It carries out the reaction oxaloacetate + H(+) = pyruvate + CO2. This chain is NAD-dependent malic enzyme, found in Shewanella putrefaciens (strain CN-32 / ATCC BAA-453).